The chain runs to 183 residues: Probable calcium-binding protein CML47 (183 aa).

2 EF-hand domains span residues 112–147 and 149–183; these read MGKE…LGYD and CTKM…KSFS. Residues aspartate 125, asparagine 127, aspartate 129, glutamate 136, aspartate 162, asparagine 164, aspartate 166, lysine 168, and glutamate 173 each contribute to the Ca(2+) site.

Its function is as follows. Potential calcium sensor. This Arabidopsis thaliana (Mouse-ear cress) protein is Probable calcium-binding protein CML47 (CML47).